Here is a 151-residue protein sequence, read N- to C-terminus: UPF0178 protein YaiI (151 aa).

It belongs to the UPF0178 family.

This Salmonella arizonae (strain ATCC BAA-731 / CDC346-86 / RSK2980) protein is UPF0178 protein YaiI.